The chain runs to 660 residues: Phosphatidylinositol-3-phosphate phosphatase MTMR7 (660 aa).

The region spanning 126-504 (GWLLVDLSEE…FTYKFWNGMY (379 aa)) is the Myotubularin phosphatase domain. A 1,2-diacyl-sn-glycero-3-phospho-(1D-myo-inositol-3-phosphate) contacts are provided by asparagine 250, asparagine 275, and isoleucine 276. The Phosphocysteine intermediate role is filled by cysteine 338. A 1,2-diacyl-sn-glycero-3-phospho-(1D-myo-inositol-3-phosphate) contacts are provided by serine 339, aspartate 340, glycine 341, tryptophan 342, aspartate 343, arginine 344, and arginine 384. Residues 514 to 548 (RQSVTDYLMAVKEESQQLEEELESLEERLEKIQKV) are a coiled coil. The disordered stretch occupies residues 550 to 660 (LHGTKVKSKQ…DSDEAVFLTA (111 aa)). Positions 566–596 (SGFSTSDHSTANTPQDYSGNSKSFPSRSPSQ) are enriched in polar residues. Threonine 578 carries the post-translational modification Phosphothreonine. Positions 641-653 (APSEDSGKDRDSD) are enriched in basic and acidic residues.

This sequence belongs to the protein-tyrosine phosphatase family. Non-receptor class myotubularin subfamily. As to quaternary structure, heterodimer (via C-terminus) with MTMR9 (via coiled coil domain); the interaction enhances MTMR7 catalytic activity. Does not homodimerize. Interacts with RAB1B (in GDP-bound form). As to expression, highly expressed in brain (at protein level). Expressed at low levels in liver, kidney and testis.

It localises to the cytoplasm. It is found in the endomembrane system. It catalyses the reaction a 1,2-diacyl-sn-glycero-3-phospho-(1D-myo-inositol-3-phosphate) + H2O = a 1,2-diacyl-sn-glycero-3-phospho-(1D-myo-inositol) + phosphate. The enzyme catalyses 1D-myo-inositol 1,3-bisphosphate + H2O = 1D-myo-inositol 1-phosphate + phosphate. With respect to regulation, interaction with MTMR9 increases phosphatase activity. Lipid phosphatase that specifically dephosphorylates the D-3 position of phosphatidylinositol 3-phosphate (PtdIns(3)P) and inositol 1,3-bisphosphate (Ins(1,3)P2). The chain is Phosphatidylinositol-3-phosphate phosphatase MTMR7 from Mus musculus (Mouse).